A 205-amino-acid polypeptide reads, in one-letter code: Adenylate kinase (205 aa).

11–16 (GSGKGT) provides a ligand contact to ATP. The NMP stretch occupies residues 31–60 (STGDIFRHNVKSMTPLGVEAKRYIDNGDFV). AMP is bound by residues Thr32, Arg37, 58-60 (DFV), 86-89 (GYPR), and Gln93. The tract at residues 127–137 (KRAEIEGRADD) is LID. Arg128 is an ATP binding site. Positions 134 and 145 each coordinate AMP. An ATP-binding site is contributed by Gly173.

Belongs to the adenylate kinase family. As to quaternary structure, monomer.

The protein localises to the cytoplasm. It carries out the reaction AMP + ATP = 2 ADP. The protein operates within purine metabolism; AMP biosynthesis via salvage pathway; AMP from ADP: step 1/1. Catalyzes the reversible transfer of the terminal phosphate group between ATP and AMP. Plays an important role in cellular energy homeostasis and in adenine nucleotide metabolism. This chain is Adenylate kinase, found in Micrococcus luteus (strain ATCC 4698 / DSM 20030 / JCM 1464 / CCM 169 / CCUG 5858 / IAM 1056 / NBRC 3333 / NCIMB 9278 / NCTC 2665 / VKM Ac-2230) (Micrococcus lysodeikticus).